A 101-amino-acid polypeptide reads, in one-letter code: Integration host factor subunit beta (101 aa).

A disordered region spans residues Pro57–Asp101. Residues Thr82–Asp101 show a composition bias toward basic and acidic residues.

It belongs to the bacterial histone-like protein family. In terms of assembly, heterodimer of an alpha and a beta chain.

Its function is as follows. This protein is one of the two subunits of integration host factor, a specific DNA-binding protein that functions in genetic recombination as well as in transcriptional and translational control. In Bradyrhizobium diazoefficiens (strain JCM 10833 / BCRC 13528 / IAM 13628 / NBRC 14792 / USDA 110), this protein is Integration host factor subunit beta.